Here is a 319-residue protein sequence, read N- to C-terminus: Cytochrome c biogenesis protein CcsA (319 aa).

A run of 7 helical transmembrane segments spans residues 9 to 29 (ILTHISFSLVSIGITIFLITL), 44 to 64 (GVIGTFLCITGLLVTRWAYSG), 71 to 91 (LYESLLFLSWSFAIIHMFPYF), 143 to 163 (MVLGYAALLCGSLLSVALLVI), 225 to 245 (IISLGFIFLTIGILSGAVWAN), 259 to 273 (TWAFITWTMFAIYLH), and 286 to 306 (AIVAFLGFIIIWICYFGVNLL).

Belongs to the CcmF/CycK/Ccl1/NrfE/CcsA family. May interact with Ccs1.

It is found in the plastid. Its subcellular location is the chloroplast thylakoid membrane. Its function is as follows. Required during biogenesis of c-type cytochromes (cytochrome c6 and cytochrome f) at the step of heme attachment. This is Cytochrome c biogenesis protein CcsA from Oenothera biennis (German evening primrose).